The chain runs to 278 residues: Tryptophan synthase alpha chain (278 aa).

Active-site proton acceptor residues include Glu-50 and Asp-61.

This sequence belongs to the TrpA family. In terms of assembly, tetramer of two alpha and two beta chains.

It catalyses the reaction (1S,2R)-1-C-(indol-3-yl)glycerol 3-phosphate + L-serine = D-glyceraldehyde 3-phosphate + L-tryptophan + H2O. It participates in amino-acid biosynthesis; L-tryptophan biosynthesis; L-tryptophan from chorismate: step 5/5. In terms of biological role, the alpha subunit is responsible for the aldol cleavage of indoleglycerol phosphate to indole and glyceraldehyde 3-phosphate. In Rhodopseudomonas palustris (strain TIE-1), this protein is Tryptophan synthase alpha chain.